Consider the following 247-residue polypeptide: Coproheme decarboxylase (247 aa).

Fe-coproporphyrin III is bound by residues Arg129, 143 to 147 (YPMDK), His170, Gln183, and Ser221. The active site involves Tyr143.

The protein belongs to the ChdC family. Type 1 subfamily. It depends on Fe-coproporphyrin III as a cofactor.

It carries out the reaction Fe-coproporphyrin III + 2 H2O2 + 2 H(+) = heme b + 2 CO2 + 4 H2O. The catalysed reaction is Fe-coproporphyrin III + H2O2 + H(+) = harderoheme III + CO2 + 2 H2O. It catalyses the reaction harderoheme III + H2O2 + H(+) = heme b + CO2 + 2 H2O. The protein operates within porphyrin-containing compound metabolism; protoheme biosynthesis. Involved in coproporphyrin-dependent heme b biosynthesis. Catalyzes the decarboxylation of Fe-coproporphyrin III (coproheme) to heme b (protoheme IX), the last step of the pathway. The reaction occurs in a stepwise manner with a three-propionate intermediate. The chain is Coproheme decarboxylase from Bacillus cytotoxicus (strain DSM 22905 / CIP 110041 / 391-98 / NVH 391-98).